Here is a 158-residue protein sequence, read N- to C-terminus: Phosphopantetheine adenylyltransferase (158 aa).

Residue Thr9 participates in substrate binding. ATP-binding positions include 9 to 10 (TF) and His17. 3 residues coordinate substrate: Lys41, Leu73, and Arg87. ATP contacts are provided by residues 88-90 (GVR), Glu98, and 123-129 (WSYVSST).

It belongs to the bacterial CoaD family. In terms of assembly, homohexamer. Mg(2+) is required as a cofactor.

It localises to the cytoplasm. The enzyme catalyses (R)-4'-phosphopantetheine + ATP + H(+) = 3'-dephospho-CoA + diphosphate. Its pathway is cofactor biosynthesis; coenzyme A biosynthesis; CoA from (R)-pantothenate: step 4/5. Its function is as follows. Reversibly transfers an adenylyl group from ATP to 4'-phosphopantetheine, yielding dephospho-CoA (dPCoA) and pyrophosphate. The protein is Phosphopantetheine adenylyltransferase of Histophilus somni (strain 129Pt) (Haemophilus somnus).